We begin with the raw amino-acid sequence, 65 residues long: Large ribosomal subunit protein bL35 (65 aa).

Residues Met1–Gln26 are disordered.

The protein belongs to the bacterial ribosomal protein bL35 family.

The sequence is that of Large ribosomal subunit protein bL35 from Buchnera aphidicola subsp. Baizongia pistaciae (strain Bp).